Here is a 257-residue protein sequence, read N- to C-terminus: 5-oxoprolinase subunit A (257 aa).

This sequence belongs to the LamB/PxpA family. As to quaternary structure, forms a complex composed of PxpA, PxpB and PxpC.

It catalyses the reaction 5-oxo-L-proline + ATP + 2 H2O = L-glutamate + ADP + phosphate + H(+). Catalyzes the cleavage of 5-oxoproline to form L-glutamate coupled to the hydrolysis of ATP to ADP and inorganic phosphate. This is 5-oxoprolinase subunit A from Halalkalibacterium halodurans (strain ATCC BAA-125 / DSM 18197 / FERM 7344 / JCM 9153 / C-125) (Bacillus halodurans).